The chain runs to 243 residues: CTD nuclear envelope phosphatase 1 homolog (243 aa).

Residues 11–27 (ALLLLLSKVWTCICFMF) traverse the membrane as a helical segment. Residues 56-223 (SLVQRKTLVL…LSLLPMLDAL (168 aa)) enclose the FCP1 homology domain.

The protein belongs to the dullard family.

It localises to the membrane. It carries out the reaction O-phospho-L-seryl-[protein] + H2O = L-seryl-[protein] + phosphate. It catalyses the reaction O-phospho-L-threonyl-[protein] + H2O = L-threonyl-[protein] + phosphate. Its function is as follows. Serine/threonine protein phosphatase that may dephosphorylate and activate lipin-like phosphatases. Lipins are phosphatidate phosphatases that catalyze the conversion of phosphatidic acid to diacylglycerol and control the metabolism of fatty acids at different levels. May indirectly modulate the lipid composition of nuclear and/or endoplasmic reticulum membranes and be required for proper nuclear membrane morphology and/or dynamics. May also indirectly regulate the production of lipid droplets and triacylglycerol. The sequence is that of CTD nuclear envelope phosphatase 1 homolog (Dd) from Drosophila melanogaster (Fruit fly).